We begin with the raw amino-acid sequence, 199 residues long: Ribosome maturation factor RimM (199 aa).

The PRC barrel domain occupies 93 to 169 (DDEYYHADLI…IELPDEIDGE (77 aa)). The interval 164–199 (DEIDGEDRASADESASAEDDAAAPNSARHPRESGDP) is disordered.

This sequence belongs to the RimM family. In terms of assembly, binds ribosomal protein uS19.

It localises to the cytoplasm. Its function is as follows. An accessory protein needed during the final step in the assembly of 30S ribosomal subunit, possibly for assembly of the head region. Essential for efficient processing of 16S rRNA. May be needed both before and after RbfA during the maturation of 16S rRNA. It has affinity for free ribosomal 30S subunits but not for 70S ribosomes. In Bradyrhizobium sp. (strain ORS 278), this protein is Ribosome maturation factor RimM.